The primary structure comprises 793 residues: Putative dipeptidyl aminopeptidase C2E11.08 (793 aa).

The Cytoplasmic portion of the chain corresponds to 1–24 (MNDFSFEDKGLISRSGFGSRHVRR). Residues 25 to 45 (VVKALALIFSLLILYLTISNV) traverse the membrane as a helical; Signal-anchor for type II membrane protein segment. Residues 46 to 793 (SDSPPKRDSL…STGVRQHRWD (748 aa)) are Lumenal-facing. N-linked (GlcNAc...) asparagine glycosylation is found at N101, N136, N246, N299, N303, N324, N336, N377, N384, N407, and N535. Active-site charge relay system residues include S647, D722, and H755. Residue N761 is glycosylated (N-linked (GlcNAc...) asparagine).

Belongs to the peptidase S9B family.

It localises to the vacuole membrane. The polypeptide is Putative dipeptidyl aminopeptidase C2E11.08 (Schizosaccharomyces pombe (strain 972 / ATCC 24843) (Fission yeast)).